The primary structure comprises 392 residues: Acetyl-CoA acetyltransferase (392 aa).

The active-site Acyl-thioester intermediate is Cys-87. Catalysis depends on proton acceptor residues His-348 and Cys-378.

Belongs to the thiolase-like superfamily. Thiolase family.

The protein localises to the cytoplasm. It carries out the reaction 2 acetyl-CoA = acetoacetyl-CoA + CoA. Its pathway is metabolic intermediate biosynthesis; (R)-mevalonate biosynthesis; (R)-mevalonate from acetyl-CoA: step 1/3. Functionally, involved in the production of polyhydroxyalkonic acids (PHAs), composed primarily of 3-hydroxybutyric acid (3HB) and 3-hydroxyvaleric acid (3HV). This Chromobacterium violaceum (strain ATCC 12472 / DSM 30191 / JCM 1249 / CCUG 213 / NBRC 12614 / NCIMB 9131 / NCTC 9757 / MK) protein is Acetyl-CoA acetyltransferase (phaA).